Reading from the N-terminus, the 341-residue chain is ATPase GET3 (341 aa).

Residue 34–41 coordinates ATP; sequence KGGVGKTT. Residue Asp-63 is part of the active site. ATP contacts are provided by Glu-245 and Asn-272. Zn(2+) contacts are provided by Cys-283 and Cys-286.

This sequence belongs to the arsA ATPase family. In terms of assembly, homodimer.

The protein localises to the cytoplasm. The protein resides in the endoplasmic reticulum. In terms of biological role, ATPase required for the post-translational delivery of tail-anchored (TA) proteins to the endoplasmic reticulum. Recognizes and selectively binds the transmembrane domain of TA proteins in the cytosol. This complex then targets to the endoplasmic reticulum by membrane-bound receptors, where the tail-anchored protein is released for insertion. This process is regulated by ATP binding and hydrolysis. ATP binding drives the homodimer towards the closed dimer state, facilitating recognition of newly synthesized TA membrane proteins. ATP hydrolysis is required for insertion. Subsequently, the homodimer reverts towards the open dimer state, lowering its affinity for the membrane-bound receptor, and returning it to the cytosol to initiate a new round of targeting. This is ATPase GET3 from Paracoccidioides lutzii (strain ATCC MYA-826 / Pb01) (Paracoccidioides brasiliensis).